We begin with the raw amino-acid sequence, 459 residues long: N-chimaerin (459 aa).

A2 bears the N-acetylalanine mark. The SH2 domain occupies 49 to 135 (EFHGMISREA…IETKAAEYIA (87 aa)). Phosphothreonine is present on T192. A Phorbol-ester/DAG-type zinc finger spans residues 205-255 (IHNFKVHTFRGPHWCEYCANFMWGLIAQGVKCADCGLNVHKQCSKMVPNDC). The Rho-GAP domain maps to 268-459 (CDLTTLVKAH…LLIKNEDILF (192 aa)). Residue T340 is modified to Phosphothreonine.

Interacts with EPHA4; effector of EPHA4 in axon guidance linking EPHA4 activation to RAC1 regulation. In terms of processing, phosphorylated. Phosphorylation is EPHA4 kinase activity-dependent. As to expression, in neurons in brain regions that are involved in learning and memory processes.

GTPase-activating protein for p21-rac and a phorbol ester receptor. Involved in the assembly of neuronal locomotor circuits as a direct effector of EPHA4 in axon guidance. This Homo sapiens (Human) protein is N-chimaerin (CHN1).